A 305-amino-acid chain; its full sequence is tRNA dimethylallyltransferase (305 aa).

9–16 (GPTASGKT) provides a ligand contact to ATP. 11-16 (TASGKT) is a substrate binding site. Interaction with substrate tRNA stretches follow at residues 34-37 (DSAL), 158-162 (QRLSR), and 239-244 (RCVGYR).

The protein belongs to the IPP transferase family. Monomer. Mg(2+) is required as a cofactor.

The enzyme catalyses adenosine(37) in tRNA + dimethylallyl diphosphate = N(6)-dimethylallyladenosine(37) in tRNA + diphosphate. Catalyzes the transfer of a dimethylallyl group onto the adenine at position 37 in tRNAs that read codons beginning with uridine, leading to the formation of N6-(dimethylallyl)adenosine (i(6)A). The chain is tRNA dimethylallyltransferase from Aeromonas hydrophila subsp. hydrophila (strain ATCC 7966 / DSM 30187 / BCRC 13018 / CCUG 14551 / JCM 1027 / KCTC 2358 / NCIMB 9240 / NCTC 8049).